A 200-amino-acid polypeptide reads, in one-letter code: Recombination protein RecR (200 aa).

The C4-type zinc-finger motif lies at 57–72 (CSQCRDFTEEDTCNIC). Positions 81–176 (GLLCVVEMPA…KVSRIAHGIP (96 aa)) constitute a Toprim domain.

This sequence belongs to the RecR family.

Its function is as follows. May play a role in DNA repair. It seems to be involved in an RecBC-independent recombinational process of DNA repair. It may act with RecF and RecO. The protein is Recombination protein RecR of Haemophilus influenzae (strain 86-028NP).